The sequence spans 492 residues: Glycerol kinase (492 aa).

Threonine 11 is a binding site for ADP. 2 residues coordinate ATP: threonine 11 and threonine 12. Residue threonine 11 coordinates sn-glycerol 3-phosphate. Lysine 15 lines the ADP pocket. The sn-glycerol 3-phosphate site is built by arginine 79, glutamate 80, tyrosine 129, and aspartate 238. Arginine 79, glutamate 80, tyrosine 129, aspartate 238, and glutamine 239 together coordinate glycerol. Threonine 260, glycine 302, glycine 403, and asparagine 407 together coordinate ADP. Positions 260, 302, and 403 each coordinate ATP.

Belongs to the FGGY kinase family.

The catalysed reaction is glycerol + ATP = sn-glycerol 3-phosphate + ADP + H(+). It participates in polyol metabolism; glycerol degradation via glycerol kinase pathway; sn-glycerol 3-phosphate from glycerol: step 1/1. With respect to regulation, inhibited by fructose 1,6-bisphosphate (FBP). In terms of biological role, key enzyme in the regulation of glycerol uptake and metabolism. Catalyzes the phosphorylation of glycerol to yield sn-glycerol 3-phosphate. In Aquifex aeolicus (strain VF5), this protein is Glycerol kinase.